The primary structure comprises 336 residues: Ultraviolet-sensitive opsin (336 aa).

The Extracellular segment spans residues 1 to 29; it reads MDAWTYQFGNLSKISPFEGPQYHLAPKWA. An N-linked (GlcNAc...) asparagine glycan is attached at Asn-10. The helical transmembrane segment at 30–54 threads the bilayer; that stretch reads FYLQAAFMGFVFFVGTPLNAIVLFV. At 55-66 the chain is on the cytoplasmic side; that stretch reads TMKYKKLRQPLN. A helical transmembrane segment spans residues 67 to 91; the sequence is YILVNISLGGFIFDTFSVSQVFFSA. Over 92-106 the chain is Extracellular; it reads LRGYYFFGYTLCAME. Cys-103 and Cys-180 form a disulfide bridge. Residues 107-126 form a helical membrane-spanning segment; sequence AAMGSIAGLVTGWSLAVLAF. Topologically, residues 127-145 are cytoplasmic; that stretch reads ERYVVICKPFGSFKFGQSQ. A helical membrane pass occupies residues 146-169; that stretch reads ALGAVALTWIIGIGCATPPFWGWS. At 170–195 the chain is on the extracellular side; it reads RYIPEGIGTACGPDWYTKNEEYNTES. A helical membrane pass occupies residues 196–223; sequence YTYFLLVSCFMMPIMIITFSYSQLLGAL. Topologically, residues 224 to 245 are cytoplasmic; sequence RAVAAQQAESASTQKAEKEVSR. Residues 246-269 form a helical membrane-spanning segment; that stretch reads MVVVMVGSFVVCYGPYAITALYFS. The Extracellular portion of the chain corresponds to 270-277; it reads YAEDSNKD. A helical transmembrane segment spans residues 278 to 302; it reads YRLVAIPSLFSKSSCVYNPLIYAFM. Lys-289 carries the N6-(retinylidene)lysine modification. Over 303–336 the chain is Cytoplasmic; it reads NKQFNACIMETVFGKKIDESSEVSSKTETSSVSA.

It belongs to the G-protein coupled receptor 1 family. Opsin subfamily. In terms of processing, phosphorylated on some or all of the serine and threonine residues present in the C-terminal region.

The protein resides in the membrane. In terms of biological role, visual pigments are the light-absorbing molecules that mediate vision. They consist of an apoprotein, opsin, covalently linked to cis-retinal. This is Ultraviolet-sensitive opsin from Carassius auratus (Goldfish).